Reading from the N-terminus, the 89-residue chain is Small ribosomal subunit protein uS15 (89 aa).

Belongs to the universal ribosomal protein uS15 family. In terms of assembly, part of the 30S ribosomal subunit. Forms a bridge to the 50S subunit in the 70S ribosome, contacting the 23S rRNA.

Functionally, one of the primary rRNA binding proteins, it binds directly to 16S rRNA where it helps nucleate assembly of the platform of the 30S subunit by binding and bridging several RNA helices of the 16S rRNA. In terms of biological role, forms an intersubunit bridge (bridge B4) with the 23S rRNA of the 50S subunit in the ribosome. This chain is Small ribosomal subunit protein uS15, found in Nocardia farcinica (strain IFM 10152).